The primary structure comprises 424 residues: Inhibin beta A chain (424 aa).

Positions 1–20 are cleaved as a signal peptide; that stretch reads MPLLWLRGFLLASCWIIVRS. The propeptide occupies 21-308; the sequence is SPTPGSEGHG…EDHPHRRRRR (288 aa). Asn165 carries N-linked (GlcNAc...) asparagine glycosylation. The segment covering 264-275 has biased composition (basic and acidic residues); the sequence is EVDGDGKKKDGS. Positions 264 to 306 are disordered; that stretch reads EVDGDGKKKDGSDGGLEEEKEQSHRPFLMLQARQSEDHPHRRR. Disulfide bonds link Cys312/Cys320, Cys319/Cys389, Cys348/Cys421, and Cys352/Cys423.

This sequence belongs to the TGF-beta family. Dimeric, linked by one or more disulfide bonds. Inhibin A is a dimer of alpha/INHA and beta-A/INHBA. Activin A is a homodimer of beta-A/INHBA. Activin AB is a dimer of beta-A/INHBA and beta-B/INHBB. Interacts with FST and FSTL3; these interactions prevent activin A interaction to its type II receptor. Activin A interacts with ACVR2A. Activin A interacts with BMPR2. Inhibin A interacts with ACVR1; this interaction creates a non-signaling complex (NSC) that inhibits ACVR1-mediated BMP signaling. Inhibin A interacts with ACVR2A.

It localises to the secreted. In terms of biological role, inhibins/activins are involved in regulating a number of diverse functions such as hypothalamic and pituitary hormone secretion, gonadal hormone secretion, germ cell development and maturation, erythroid differentiation, insulin secretion, nerve cell survival, embryonic axial development or bone growth, depending on their subunit composition. Functionally, activin A is a homodimer of INHBA that plays a role in several essential biological processes including embryonic development, stem cell maintenance and differentiation, haematopoiesis, cell proliferation and tissue fibrosis. Signals through type I (such as ACVR1B or ACVR1C) and type II receptors (such as ACVR2A, ACVR2B or BMPR2) which, upon ligand binding, phosphorylate SMAD2 and SMAD3 intracellular signaling mediators that form a complex with SMAD4, translocate to the nucleus and modulate gene expression. Can also activate alternative non-canonical intracellular signaling pathways including the p38 MAPK, extracellular signal-regulated kinases 1/2 (ERK1/2) and c-Jun N-terminal kinases (JNKs) to modulate cell migration and differentiation. Alternatively, promotes osteoblastic differentiation via ACVRL1-SMAD1/5/9 pathway. In addition, can engage the type I receptor ACVR1 to form an ACVR1-activin A-type II receptor non-signaling complex (NSC) that renders receptors unavailable for engagement with BMPs, hence resulting in an apparent inhibition of ACVR1-mediated BMP signaling. Inhibin A is a dimer of alpha/INHA and beta-A/INHBA that functions as a feedback regulator in the hypothalamic-pituitary-gonadal (HPG) axis. Inhibits the secretion of FSH from the anterior pituitary gland by acting on pituitary gonadotrope cells. Antagonizes activin A by binding to the proteoglycan, betaglycan, and forming a stable complex with and, thereby, sequestering type II activin receptors while excluding type I receptor. The chain is Inhibin beta A chain (Inhba) from Rattus norvegicus (Rat).